Consider the following 80-residue polypeptide: Conotoxin VnMSGL-0123 (80 aa).

The signal sequence occupies residues 1–20; sequence MSGLGIMVLTLLLLVSMATS. Residues 21-44 constitute a propeptide that is removed on maturation; sequence HQDGGGKQATQRDAINVRRRRSIT. Intrachain disulfides connect Cys53–Cys65, Cys57–Cys74, and Cys64–Cys78. Residue Phe79 is modified to Phenylalanine amide.

Belongs to the conotoxin O3 superfamily. In terms of tissue distribution, expressed by the venom duct.

It localises to the secreted. The sequence is that of Conotoxin VnMSGL-0123 from Conus ventricosus (Mediterranean cone).